The following is a 143-amino-acid chain: Anti-sigma F factor (143 aa).

This sequence belongs to the anti-sigma-factor family.

The catalysed reaction is L-seryl-[protein] + ATP = O-phospho-L-seryl-[protein] + ADP + H(+). It carries out the reaction L-threonyl-[protein] + ATP = O-phospho-L-threonyl-[protein] + ADP + H(+). Its function is as follows. Binds to sigma F and blocks its ability to form an RNA polymerase holoenzyme (E-sigma F). Phosphorylates SpoIIAA on a serine residue. This phosphorylation may enable SpoIIAA to act as an anti-anti-sigma factor that counteracts SpoIIAB and thus releases sigma F from inhibition. This Caldanaerobacter subterraneus subsp. tengcongensis (strain DSM 15242 / JCM 11007 / NBRC 100824 / MB4) (Thermoanaerobacter tengcongensis) protein is Anti-sigma F factor.